The chain runs to 273 residues: MYPSCSLLQRLVWFPFLALVATQLLFIRNVSSLNLTNEYLHHKCLVSEGKYKPGSKYEYILNDHIRFLAAGNFRSGSMHMTSGLKPNAVTILYQCRGDSYNSKCRSCYAAGISGLRRRCPRNKGGIIWFDQCFVEITSISVIDFNISKINYENNFPLHNPNRVSGDIKSFNNETMALLKELALKANNKDNMDNGKMALYASGEKRVGTKKVYAMVQCMRDLVKPKMCKECLESIIKEFPECCDGKQGGRILGTSCDFRYELYPFLRTSDSKTV.

The signal sequence occupies residues 1–32 (MYPSCSLLQRLVWFPFLALVATQLLFIRNVSS). Gnk2-homologous domains lie at 39–141 (YLHH…SISV) and 151–264 (YENN…LYPF).

The protein belongs to the cysteine-rich repeat secretory protein family.

It is found in the secreted. The polypeptide is Putative cysteine-rich repeat secretory protein 40 (CRRSP40) (Arabidopsis thaliana (Mouse-ear cress)).